The chain runs to 391 residues: Phosphoglycerate kinase (391 aa).

Residues 21-23 (DLN), arginine 36, 59-62 (HLGR), arginine 113, and arginine 146 contribute to the substrate site. ATP contacts are provided by residues lysine 197, glutamate 319, and 345-348 (GGDT).

The protein belongs to the phosphoglycerate kinase family. Monomer.

The protein resides in the cytoplasm. The enzyme catalyses (2R)-3-phosphoglycerate + ATP = (2R)-3-phospho-glyceroyl phosphate + ADP. The protein operates within carbohydrate degradation; glycolysis; pyruvate from D-glyceraldehyde 3-phosphate: step 2/5. The chain is Phosphoglycerate kinase from Shewanella piezotolerans (strain WP3 / JCM 13877).